Reading from the N-terminus, the 443-residue chain is Phosphoglucosamine mutase (443 aa).

Ser-101 serves as the catalytic Phosphoserine intermediate. Ser-101, Asp-240, Asp-242, and Asp-244 together coordinate Mg(2+). Ser-101 is subject to Phosphoserine.

The protein belongs to the phosphohexose mutase family. The cofactor is Mg(2+). Post-translationally, activated by phosphorylation.

The catalysed reaction is alpha-D-glucosamine 1-phosphate = D-glucosamine 6-phosphate. Functionally, catalyzes the conversion of glucosamine-6-phosphate to glucosamine-1-phosphate. This Psychromonas ingrahamii (strain DSM 17664 / CCUG 51855 / 37) protein is Phosphoglucosamine mutase.